The sequence spans 207 residues: Large ribosomal subunit protein uL4 (207 aa).

The protein belongs to the universal ribosomal protein uL4 family. As to quaternary structure, part of the 50S ribosomal subunit.

Its function is as follows. One of the primary rRNA binding proteins, this protein initially binds near the 5'-end of the 23S rRNA. It is important during the early stages of 50S assembly. It makes multiple contacts with different domains of the 23S rRNA in the assembled 50S subunit and ribosome. Functionally, forms part of the polypeptide exit tunnel. This is Large ribosomal subunit protein uL4 from Geobacter sulfurreducens (strain ATCC 51573 / DSM 12127 / PCA).